Consider the following 448-residue polypeptide: T-box transcription factor T homolog 1 (448 aa).

A DNA-binding region (T-box) is located at residues 54 to 224; sequence LWDKFNALTN…YNPFAKAFLD (171 aa). Disordered stretches follow at residues 290 to 312 and 401 to 448; these read APYP…TAAS and TTAS…PPSL. Residues 417–442 show a composition bias toward polar residues; sequence STDSGYGHSTTPPAPQTRITSNNWSP.

The protein resides in the nucleus. Involved in the transcriptional regulation of genes required for mesoderm formation and differentiation. In Branchiostoma floridae (Florida lancelet), this protein is T-box transcription factor T homolog 1.